The following is a 573-amino-acid chain: MLO-like protein 2 (573 aa).

Residues 1-15 (MADQVKERTLEETST) lie on the Extracellular side of the membrane. Residues 16–36 (WAVAVVCFVLLFISIVLEHSI) traverse the membrane as a helical segment. Topologically, residues 37–61 (HKIGTWFKKKHKQALFEALEKVKAE) are cytoplasmic. The chain crosses the membrane as a helical span at residues 62–82 (LMLLGFISLLLTIGQTPISNI). Residues 83–164 (CISQKVASTM…VSAYGIHQLH (82 aa)) lie on the Extracellular side of the membrane. The chain crosses the membrane as a helical span at residues 165-185 (IFIFVLAVVHVVYCIVTYAFG). The Cytoplasmic portion of the chain corresponds to 186 to 287 (KIKMRTWKSW…KYIQRSLEKD (102 aa)). Residues 288 to 308 (FKTVVEISPVIWFVAVLFLLT) form a helical membrane-spanning segment. At 309–317 (NSYGLRSYL) the chain is on the extracellular side. A helical transmembrane segment spans residues 318–338 (WLPFIPLVVILIVGTKLEVII). The Cytoplasmic portion of the chain corresponds to 339-371 (TKLGLRIQEKGDVVRGAPVVQPGDDLFWFGKPR). Residues 372 to 392 (FILFLIHLVLFTNAFQLAFFA) form a helical membrane-spanning segment. The Extracellular portion of the chain corresponds to 393-415 (WSTYEFNLNNCFHESTADVVIRL). The chain crosses the membrane as a helical span at residues 416–436 (VVGAVVQILCSYVTLPLYALV). Topologically, residues 437-573 (TQMGSKMKPT…KSLRDFSFKK (137 aa)) are cytoplasmic. Residues 450–471 (DRVATALKKWHHTAKNETKHGR) form a calmodulin-binding region. The segment at 462-573 (TAKNETKHGR…KSLRDFSFKK (112 aa)) is disordered. Polar residues-rich tracts occupy residues 473–490 (SGSN…THGS) and 498–513 (NFNN…SPSP). Position 512 is a phosphoserine (serine 512). Residues 522–548 (EHQFWDPESQHQEAETSTHHSLAHESS) are compositionally biased toward basic and acidic residues.

The protein belongs to the MLO family.

The protein localises to the membrane. May be involved in modulation of pathogen defense and leaf cell death. Activity seems to be regulated by Ca(2+)-dependent calmodulin binding and seems not to require heterotrimeric G proteins. This Arabidopsis thaliana (Mouse-ear cress) protein is MLO-like protein 2 (MLO2).